Consider the following 858-residue polypeptide: Heat shock protein 105 kDa (858 aa).

At serine 2 the chain carries N-acetylserine. At lysine 471 the chain carries N6-acetyllysine. 2 disordered regions span residues 500-585 (KVPT…PPEA) and 801-858 (VNQP…MDLD). Residues 504–515 (EEDDGSSVEADM) are compositionally biased toward acidic residues. Residues serine 509 and serine 510 each carry the phosphoserine modification. Residues 533-549 (QQDNSEAGTQPQVQTDG) show a composition bias toward polar residues. Serine 558 carries the post-translational modification Phosphoserine. Basic and acidic residues-rich tracts occupy residues 564-585 (EENK…PPEA) and 806-815 (PKIESPKLER). Position 810 is a phosphoserine (serine 810). Threonine 816 carries the phosphothreonine modification. Basic and acidic residues predominate over residues 822-834 (LDKKEDLEGKDNF).

This sequence belongs to the heat shock protein 70 family. In terms of assembly, interacts with HSPA8/HSC70. Interacts with HSPA1A (via NBD) and HSPA1B (via NBD). Phosphorylation on Ser-509 may be important for regulation of the HSPA8/HSC70 chaperone activity. Predominantly expressed in the brain and also found in the liver.

The protein resides in the cytoplasm. In terms of biological role, acts as a nucleotide-exchange factor (NEF) for chaperone proteins HSPA1A and HSPA1B, promoting the release of ADP from HSPA1A/B thereby triggering substrate release. Prevents the aggregation of denatured proteins in cells under severe stress, on which the ATP levels decrease markedly. Inhibits HSPA8/HSC70 ATPase and chaperone activities. The chain is Heat shock protein 105 kDa (HSPH1) from Cricetulus griseus (Chinese hamster).